Here is a 198-residue protein sequence, read N- to C-terminus: Phosphoheptose isomerase (198 aa).

The region spanning 36-195 (AIEVYQNGNK…EEAIFRNKFV (160 aa)) is the SIS domain. 51-53 (NGG) contributes to the substrate binding site. Zn(2+) is bound by residues His60 and Glu64. Substrate contacts are provided by residues Glu64, 93 to 94 (ND), 119 to 121 (STS), Ser124, and Gln171. Gln171 and His179 together coordinate Zn(2+).

The protein belongs to the SIS family. GmhA subfamily. Zn(2+) serves as cofactor.

The protein resides in the cytoplasm. It carries out the reaction 2 D-sedoheptulose 7-phosphate = D-glycero-alpha-D-manno-heptose 7-phosphate + D-glycero-beta-D-manno-heptose 7-phosphate. It functions in the pathway carbohydrate biosynthesis; D-glycero-D-manno-heptose 7-phosphate biosynthesis; D-glycero-alpha-D-manno-heptose 7-phosphate and D-glycero-beta-D-manno-heptose 7-phosphate from sedoheptulose 7-phosphate: step 1/1. The protein operates within cell surface structure biogenesis; S-layer biogenesis. Its function is as follows. Catalyzes the isomerization of sedoheptulose 7-phosphate in D-glycero-D-manno-heptose 7-phosphate. This is Phosphoheptose isomerase from Aneurinibacillus thermoaerophilus.